A 363-amino-acid chain; its full sequence is Aminomethyltransferase (363 aa).

The protein belongs to the GcvT family. As to quaternary structure, the glycine cleavage system is composed of four proteins: P, T, L and H.

It carries out the reaction N(6)-[(R)-S(8)-aminomethyldihydrolipoyl]-L-lysyl-[protein] + (6S)-5,6,7,8-tetrahydrofolate = N(6)-[(R)-dihydrolipoyl]-L-lysyl-[protein] + (6R)-5,10-methylene-5,6,7,8-tetrahydrofolate + NH4(+). The glycine cleavage system catalyzes the degradation of glycine. The sequence is that of Aminomethyltransferase from Nitrosomonas europaea (strain ATCC 19718 / CIP 103999 / KCTC 2705 / NBRC 14298).